A 191-amino-acid polypeptide reads, in one-letter code: UPF0149 protein VV2847 (191 aa).

It belongs to the UPF0149 family.

This chain is UPF0149 protein VV2847, found in Vibrio vulnificus (strain YJ016).